Reading from the N-terminus, the 66-residue chain is Period circadian protein (66 aa).

The disordered stretch occupies residues 1–66 (EGSGGSGSSG…VTLTESLLNK (66 aa)). A compositionally biased stretch (low complexity) spans 9 to 31 (SGNFTTGSNIHMSSVTNTSNAGT). 4 consecutive repeat copies span residues 30–31 (GT), 32–33 (GT), 35–36 (GT), and 37–38 (GN). A 4 X 2 AA tandem repeats of G-[TN] region spans residues 30 to 53 (GTGTSGTGNSGGGSGGGTGPGSGA). Over residues 32–51 (GTSGTGNSGGGSGGGTGPGS) the composition is skewed to gly residues.

In terms of assembly, forms a heterodimer with timeless (TIM); the complex then translocates into the nucleus. Phosphorylated with a circadian rhythmicity, probably by the double-time protein (dbt). Phosphorylation could be implicated in the stability of per monomer and in the formation of heterodimer per-tim.

It localises to the nucleus. Its subcellular location is the cytoplasm. The protein resides in the perinuclear region. Essential for biological clock functions. Determines the period length of circadian and ultradian rhythms; an increase in PER dosage leads to shortened circadian rhythms and a decrease leads to lengthened circadian rhythms. Essential for the circadian rhythmicity of locomotor activity, eclosion behavior, and for the rhythmic component of the male courtship song that originates in the thoracic nervous system. The biological cycle depends on the rhythmic formation and nuclear localization of the TIM-PER complex. Light induces the degradation of TIM, which promotes elimination of PER. Nuclear activity of the heterodimer coordinatively regulates PER and TIM transcription through a negative feedback loop. Behaves as a negative element in circadian transcriptional loop. Does not appear to bind DNA, suggesting indirect transcriptional inhibition. This Drosophila saltans (Fruit fly) protein is Period circadian protein (per).